Reading from the N-terminus, the 178-residue chain is dCTP deaminase (178 aa).

Residues 99–104 (RSTWAR) and aspartate 115 contribute to the dCTP site. Glutamate 125 serves as the catalytic Proton donor/acceptor. DCTP is bound by residues tyrosine 157 and glutamine 164.

This sequence belongs to the dCTP deaminase family. In terms of assembly, homotrimer.

It catalyses the reaction dCTP + H2O + H(+) = dUTP + NH4(+). It functions in the pathway pyrimidine metabolism; dUMP biosynthesis; dUMP from dCTP (dUTP route): step 1/2. In terms of biological role, catalyzes the deamination of dCTP to dUTP. The polypeptide is dCTP deaminase (Aeropyrum pernix (strain ATCC 700893 / DSM 11879 / JCM 9820 / NBRC 100138 / K1)).